The primary structure comprises 233 residues: Putative 26S proteasome non-ATPase regulatory subunit 8 homolog B (233 aa).

An N-acetylmethionine modification is found at M1. The PCI domain occupies 38 to 217; it reads DHYLISLSLN…APCKEIPSLQ (180 aa).

It belongs to the proteasome subunit S14 family. Component of the 19S regulatory particle (RP/PA700) lid subcomplex of the 26S proteasome. The 26S proteasome is composed of a core protease (CP), known as the 20S proteasome, capped at one or both ends by the 19S regulatory particle (RP/PA700). The RP/PA700 complex is composed of at least 17 different subunits in two subcomplexes, the base and the lid, which form the portions proximal and distal to the 20S proteolytic core, respectively. Interacts with UCH1 and UCH2.

In terms of biological role, acts as a regulatory subunit of the 26S proteasome which is involved in the ATP-dependent degradation of ubiquitinated proteins. In Arabidopsis thaliana (Mouse-ear cress), this protein is Putative 26S proteasome non-ATPase regulatory subunit 8 homolog B.